A 334-amino-acid polypeptide reads, in one-letter code: L-lactate dehydrogenase C chain (334 aa).

NAD(+)-binding positions include 30 to 58 and Arg-100; that span reads GQVG…VEDK. Residues Arg-107, Asn-139, and Arg-170 each contribute to the substrate site. An NAD(+)-binding site is contributed by Asn-139. His-194 acts as the Proton acceptor in catalysis. Thr-249 contributes to the substrate binding site.

This sequence belongs to the LDH/MDH superfamily. LDH family. In terms of assembly, homotetramer. In terms of tissue distribution, eye and liver.

The protein localises to the cytoplasm. It catalyses the reaction (S)-lactate + NAD(+) = pyruvate + NADH + H(+). Its pathway is fermentation; pyruvate fermentation to lactate; (S)-lactate from pyruvate: step 1/1. This is L-lactate dehydrogenase C chain (ldhc) from Fundulus heteroclitus (Killifish).